Here is a 585-residue protein sequence, read N- to C-terminus: SLAIN motif-containing protein-like (585 aa).

Disordered regions lie at residues 1–34 (MVVP…PNLT), 55–125 (NQTL…RVEE), 324–365 (QDYA…EDEC), 402–476 (PRLS…SDGQ), and 492–585 (GSMS…DGCY). Residues 68 to 83 (GGTNNSNLKAGSNINN) are compositionally biased toward polar residues. The segment covering 327-345 (ASTSASRRSSSASLQSLRR) has biased composition (low complexity). Acidic residues predominate over residues 351–365 (QEFDSYSQEDEEDEC). Composition is skewed to polar residues over residues 425-434 (PNLTPRTSLR), 441-476 (NSRS…SDGQ), and 549-563 (ASPS…TPRS). Positions 575–585 (LTDESWKDGCY) are enriched in basic and acidic residues.

The protein belongs to the SLAIN motif-containing family.

In Danio rerio (Zebrafish), this protein is SLAIN motif-containing protein-like.